Here is a 731-residue protein sequence, read N- to C-terminus: Vezatin (731 aa).

The next 2 membrane-spanning stretches (helical) occupy residues 91-111 (LATP…LLVM) and 114-134 (TWWI…YLVI). Residues 382 to 414 (VRSLQLHLKALLNEVIILEDELEKLVCTKETQE) adopt a coiled-coil conformation. Disordered regions lie at residues 570 to 671 (PVDP…DSLQ) and 710 to 731 (QTFG…IEEK). The segment covering 577–586 (ISNSEPSMNS) has biased composition (polar residues). Over residues 590-601 (KVSKNDTEEESS) the composition is skewed to basic and acidic residues. Positions 658 to 671 (GLTTAPPTPRDSLQ) are enriched in polar residues. The segment covering 712 to 721 (FGDEEEEQII) has biased composition (acidic residues). A compositionally biased stretch (basic and acidic residues) spans 722–731 (EENKNKIEEK).

The protein belongs to the vezatin family. Interacts with USH2A (via the cytoplasmic region); the interaction associates VEZT with the USH2 complex at the stereocilia base. Interacts with myosin MYO7A and the cadherin-catenins complex.

It localises to the cell membrane. It is found in the cell projection. The protein localises to the stereocilium membrane. Its subcellular location is the cell junction. The protein resides in the adherens junction. It localises to the nucleus. It is found in the cytoplasmic vesicle. The protein localises to the secretory vesicle. Its subcellular location is the acrosome. In terms of biological role, plays a pivotal role in the establishment of adherens junctions and their maintenance in adult life. Required for morphogenesis of the preimplantation embryo, and for the implantation process. In Pongo abelii (Sumatran orangutan), this protein is Vezatin (VEZT).